The following is a 422-amino-acid chain: Serine--tRNA ligase (422 aa).

227–229 (TSE) contacts L-serine. ATP is bound by residues 258-260 (RRE) and Val274. Glu281 is a binding site for L-serine. 345–348 (ELTS) is an ATP binding site. Position 380 (Thr380) interacts with L-serine.

This sequence belongs to the class-II aminoacyl-tRNA synthetase family. Type-1 seryl-tRNA synthetase subfamily. In terms of assembly, homodimer. The tRNA molecule binds across the dimer.

It is found in the cytoplasm. It carries out the reaction tRNA(Ser) + L-serine + ATP = L-seryl-tRNA(Ser) + AMP + diphosphate + H(+). The enzyme catalyses tRNA(Sec) + L-serine + ATP = L-seryl-tRNA(Sec) + AMP + diphosphate + H(+). The protein operates within aminoacyl-tRNA biosynthesis; selenocysteinyl-tRNA(Sec) biosynthesis; L-seryl-tRNA(Sec) from L-serine and tRNA(Sec): step 1/1. Its function is as follows. Catalyzes the attachment of serine to tRNA(Ser). Is also able to aminoacylate tRNA(Sec) with serine, to form the misacylated tRNA L-seryl-tRNA(Sec), which will be further converted into selenocysteinyl-tRNA(Sec). In Thermobifida fusca (strain YX), this protein is Serine--tRNA ligase.